The sequence spans 197 residues: MSARAPKELRLALPPCLLNRTFASPNASGSGNTGARGPGAGGSGTCITQVGQQLFQSFSSTLVLIVLVTLIFCLIVLSLSTFHIHKRRMKKRKMQRAQEEYERDHCSGSRGGGGLPRPGRQAPTHTKETRLERQPRDSPFCAPSNASSSSSSSPGLLCQGPCAPPPPPPASSPQGAHAASSCLDTAGEGLLQTVVLS.

The signal sequence occupies residues 1 to 23; that stretch reads MSARAPKELRLALPPCLLNRTFA. N-linked (GlcNAc...) asparagine glycosylation is found at N19 and N26. Residues 24–61 are Extracellular-facing; the sequence is SPNASGSGNTGARGPGAGGSGTCITQVGQQLFQSFSST. The chain crosses the membrane as a helical span at residues 62-82; that stretch reads LVLIVLVTLIFCLIVLSLSTF. Topologically, residues 83 to 197 are cytoplasmic; the sequence is HIHKRRMKKR…EGLLQTVVLS (115 aa). The disordered stretch occupies residues 94 to 180; sequence MQRAQEEYER…SSPQGAHAAS (87 aa). Basic and acidic residues-rich tracts occupy residues 96–107 and 125–136; these read RAQEEYERDHCS and HTKETRLERQPR. Positions 147 to 161 are enriched in low complexity; that stretch reads SSSSSSSPGLLCQGP. The span at 162–171 shows a compositional bias: pro residues; the sequence is CAPPPPPPAS.

The protein localises to the membrane. This is an uncharacterized protein from Macaca fascicularis (Crab-eating macaque).